Reading from the N-terminus, the 140-residue chain is Large ribosomal subunit protein bL17 (140 aa).

This sequence belongs to the bacterial ribosomal protein bL17 family. In terms of assembly, part of the 50S ribosomal subunit. Contacts protein L32.

This Rhizobium rhizogenes (strain K84 / ATCC BAA-868) (Agrobacterium radiobacter) protein is Large ribosomal subunit protein bL17.